A 283-amino-acid polypeptide reads, in one-letter code: Gap junction beta-1 protein (283 aa).

Residues 1 to 22 lie on the Cytoplasmic side of the membrane; it reads MNWTGLYTLLSGVNRHSTAIGR. The helical transmembrane segment at 23-45 threads the bilayer; the sequence is VWLSVIFIFRIMVLVVAAESVWG. Residues 46–75 are Extracellular-facing; sequence DEKSSFICNTLQPGCNSVCYDQFFPISHVR. The helical transmembrane segment at 76–95 threads the bilayer; that stretch reads LWSLQLILVSTPALLVAMHV. At 96 to 130 the chain is on the cytoplasmic side; the sequence is AHQQHIEKKMLRLEGHGDPLHLEEVKRHKVHISGT. A helical transmembrane segment spans residues 131–153; that stretch reads LWWTYVISVVFRLLFEAVFMYVF. The Extracellular segment spans residues 154-191; that stretch reads YLLYPGYAMVRLVKCDVYPCPNTVDCFVSRPTEKTVFT. A helical membrane pass occupies residues 192–214; it reads VFMLAASGICIILNVAEVVYLII. The Cytoplasmic portion of the chain corresponds to 215–283; it reads RACARRAQRR…AEKSDRCSAC (69 aa). Phosphoserine is present on residues Ser-233, Ser-258, Ser-266, and Ser-277.

This sequence belongs to the connexin family. Beta-type (group I) subfamily. As to quaternary structure, a connexon is composed of a hexamer of connexins. Interacts with CNST.

It localises to the cell membrane. It is found in the cell junction. The protein localises to the gap junction. Functionally, one gap junction consists of a cluster of closely packed pairs of transmembrane channels, the connexons, through which materials of low MW diffuse from one cell to a neighboring cell. In Homo sapiens (Human), this protein is Gap junction beta-1 protein (GJB1).